A 279-amino-acid polypeptide reads, in one-letter code: Undecaprenyl-diphosphatase (279 aa).

8 helical membrane-spanning segments follow: residues 2–22, 44–64, 85–105, 113–133, 163–183, 188–208, 223–243, and 255–275; these read LIIELLKAIFFGIIEGITEWL, AFIEMFNIVIQLGAIIAVMLI, WQLWLKVVIACIPSILIAVPL, FYFMVPIAIALIVYGIAFIWI, VLSIVPGTSRSGATILGAIIL, TVAADFTFFLAIPTMFGYSGL, AQVLILLVASLTAFVVSLLAI, and FTIFGKYRIVLGSLLLIYSFF.

The protein belongs to the UppP family.

Its subcellular location is the cell membrane. The catalysed reaction is di-trans,octa-cis-undecaprenyl diphosphate + H2O = di-trans,octa-cis-undecaprenyl phosphate + phosphate + H(+). Functionally, catalyzes the dephosphorylation of undecaprenyl diphosphate (UPP). Confers resistance to bacitracin. The protein is Undecaprenyl-diphosphatase of Streptococcus pyogenes serotype M5 (strain Manfredo).